We begin with the raw amino-acid sequence, 362 residues long: Peptide chain release factor 1 (362 aa).

N5-methylglutamine is present on glutamine 237. Over residues 284 to 295 (EEEKRQAEETST) the composition is skewed to basic and acidic residues. Residues 284 to 304 (EEEKRQAEETSTRRNLVASGD) are disordered.

The protein belongs to the prokaryotic/mitochondrial release factor family. In terms of processing, methylated by PrmC. Methylation increases the termination efficiency of RF1.

The protein resides in the cytoplasm. Peptide chain release factor 1 directs the termination of translation in response to the peptide chain termination codons UAG and UAA. The protein is Peptide chain release factor 1 of Pseudoalteromonas atlantica (strain T6c / ATCC BAA-1087).